The chain runs to 165 residues: Large ribosomal subunit protein uL10 (165 aa).

This sequence belongs to the universal ribosomal protein uL10 family. As to quaternary structure, part of the ribosomal stalk of the 50S ribosomal subunit. The N-terminus interacts with L11 and the large rRNA to form the base of the stalk. The C-terminus forms an elongated spine to which L12 dimers bind in a sequential fashion forming a multimeric L10(L12)X complex.

Forms part of the ribosomal stalk, playing a central role in the interaction of the ribosome with GTP-bound translation factors. This Burkholderia multivorans (strain ATCC 17616 / 249) protein is Large ribosomal subunit protein uL10.